Consider the following 356-residue polypeptide: Epoxide hydrolase B (356 aa).

Positions 28 to 129 (PLVVLLHGFP…RCAGVVGISV (102 aa)) constitute an AB hydrolase-1 domain. Catalysis depends on Asp104, which acts as the Nucleophile. The active-site Proton acceptor is the His333.

The protein belongs to the AB hydrolase superfamily. Epoxide hydrolase family. Homodimer.

The enzyme catalyses an epoxide + H2O = an ethanediol. In terms of biological role, could be involved in detoxification of extraneous host-cell epoxides. Catalyzes the hydrolysis of small aromatic epoxide-containing substrates such as trans-1,3-diphenylpropene oxide, trans and cis-stilbene oxide, and terpenoid epoxide. This chain is Epoxide hydrolase B, found in Mycobacterium tuberculosis (strain CDC 1551 / Oshkosh).